The sequence spans 615 residues: uncharacterized protein (615 aa).

Serine 48 is subject to Phosphoserine. Residues 424–433 show a composition bias toward acidic residues; it reads DRENELEEGS. Residues 424–615 form a disordered region; it reads DRENELEEGS…YARKKTKKNV (192 aa). Basic and acidic residues-rich tracts occupy residues 439–476, 484–496, 504–521, and 529–561; these read DNER…KEVG, DGNK…KEVA, ESEK…KEVA, and ESEK…EPSK. Composition is skewed to basic residues over residues 579-589 and 606-615; these read KKPKVVKKVAK and YARKKTKKNV.

This is an uncharacterized protein from Arabidopsis thaliana (Mouse-ear cress).